Consider the following 321-residue polypeptide: Lipoyl synthase (321 aa).

Residues cysteine 68, cysteine 73, cysteine 79, cysteine 94, cysteine 98, cysteine 101, and serine 308 each coordinate [4Fe-4S] cluster. The 218-residue stretch at phenylalanine 80–threonine 297 folds into the Radical SAM core domain.

This sequence belongs to the radical SAM superfamily. Lipoyl synthase family. [4Fe-4S] cluster serves as cofactor.

It localises to the cytoplasm. It catalyses the reaction [[Fe-S] cluster scaffold protein carrying a second [4Fe-4S](2+) cluster] + N(6)-octanoyl-L-lysyl-[protein] + 2 oxidized [2Fe-2S]-[ferredoxin] + 2 S-adenosyl-L-methionine + 4 H(+) = [[Fe-S] cluster scaffold protein] + N(6)-[(R)-dihydrolipoyl]-L-lysyl-[protein] + 4 Fe(3+) + 2 hydrogen sulfide + 2 5'-deoxyadenosine + 2 L-methionine + 2 reduced [2Fe-2S]-[ferredoxin]. The protein operates within protein modification; protein lipoylation via endogenous pathway; protein N(6)-(lipoyl)lysine from octanoyl-[acyl-carrier-protein]: step 2/2. Its function is as follows. Catalyzes the radical-mediated insertion of two sulfur atoms into the C-6 and C-8 positions of the octanoyl moiety bound to the lipoyl domains of lipoate-dependent enzymes, thereby converting the octanoylated domains into lipoylated derivatives. The polypeptide is Lipoyl synthase (Vibrio cholerae serotype O1 (strain ATCC 39541 / Classical Ogawa 395 / O395)).